The following is a 616-amino-acid chain: Chaperone protein HscA (616 aa).

This sequence belongs to the heat shock protein 70 family.

Functionally, chaperone involved in the maturation of iron-sulfur cluster-containing proteins. Has a low intrinsic ATPase activity which is markedly stimulated by HscB. Involved in the maturation of IscU. This chain is Chaperone protein HscA, found in Escherichia coli O6:H1 (strain CFT073 / ATCC 700928 / UPEC).